The sequence spans 639 residues: Coiled-coil domain-containing protein 27 (639 aa).

Positions 154 to 176 (YPRKRSEPSDPSPTGSPTVVKKS) are disordered. Positions 203-242 (QRFSEMESQMQKKDQEILTLQKEKEALKKQLKNLLRGKGT) form a coiled coil. The interval 291 to 385 (ESSKELHVEP…EECHPKRSYS (95 aa)) is disordered. Positions 292–309 (SSKELHVEPGSAIEEKSS) are enriched in basic and acidic residues. Over residues 310–320 (EGPPEEAAAAK) the composition is skewed to low complexity. Composition is skewed to acidic residues over residues 336 to 350 (GPEEEEEEEEEEVEG) and 358 to 369 (EGEILVNEEEAS). Over residues 370-380 (WELREDEECHP) the composition is skewed to basic and acidic residues.

In Mus musculus (Mouse), this protein is Coiled-coil domain-containing protein 27 (Ccdc27).